Consider the following 767-residue polypeptide: GPI ethanolamine phosphate transferase 2 (767 aa).

N-linked (GlcNAc...) asparagine glycans are attached at residues Asn186 and Asn401. The next 2 helical transmembrane spans lie at Leu407–Gly427 and Val434–Val454. A glycan (N-linked (GlcNAc...) asparagine) is linked at Asn490. The next 3 membrane-spanning stretches (helical) occupy residues Ile513–Ser533, Ile538–Val558, and Ile595–Ala615. The N-linked (GlcNAc...) asparagine glycan is linked to Asn627. A run of 3 helical transmembrane segments spans residues Ser655–Ala675, Thr695–Leu715, and Leu733–Leu755.

It belongs to the PIGG/PIGN/PIGO family. PIGG subfamily.

The protein resides in the endoplasmic reticulum membrane. The protein operates within glycolipid biosynthesis; glycosylphosphatidylinositol-anchor biosynthesis. Ethanolamine phosphate transferase involved in glycosylphosphatidylinositol-anchor biosynthesis. Transfers ethanolamine phosphate to the GPI second mannose. This Aspergillus fumigatus (strain ATCC MYA-4609 / CBS 101355 / FGSC A1100 / Af293) (Neosartorya fumigata) protein is GPI ethanolamine phosphate transferase 2 (las21).